The following is a 95-amino-acid chain: ESAT-6-like protein EsxA (95 aa).

The protein belongs to the WXG100 family. ESAT-6 subfamily. Forms a tight 1:1 complex with EsxB. An artificial EsxA-EsxB heterodimer interacts with EspA.

It is found in the secreted. Its function is as follows. An exported protein. Unlike its M.tuberculosis counterpart has poor pore forming ability in artificial liposomes, does not undergo conformational change at acidic pH. Mutation of 2 residues to those found in M.tuberculosis (25-TA-26 to IH) alters the properties of this protein so that it inserts into liposomes at acidic pH, forming pores, like its M.tuberculosis counterpart. The sequence is that of ESAT-6-like protein EsxA from Mycolicibacterium smegmatis (strain ATCC 700084 / mc(2)155) (Mycobacterium smegmatis).